A 785-amino-acid chain; its full sequence is Endonuclease MutS2 (785 aa).

Residue Gly-333–Thr-340 participates in ATP binding. Positions Leu-710–Lys-785 constitute a Smr domain.

Belongs to the DNA mismatch repair MutS family. MutS2 subfamily. Homodimer. Binds to stalled ribosomes, contacting rRNA.

Functionally, endonuclease that is involved in the suppression of homologous recombination and thus may have a key role in the control of bacterial genetic diversity. Acts as a ribosome collision sensor, splitting the ribosome into its 2 subunits. Detects stalled/collided 70S ribosomes which it binds and splits by an ATP-hydrolysis driven conformational change. Acts upstream of the ribosome quality control system (RQC), a ribosome-associated complex that mediates the extraction of incompletely synthesized nascent chains from stalled ribosomes and their subsequent degradation. Probably generates substrates for RQC. This is Endonuclease MutS2 from Lactobacillus acidophilus (strain ATCC 700396 / NCK56 / N2 / NCFM).